Consider the following 356-residue polypeptide: Peptide chain release factor 1 (356 aa).

Residue glutamine 232 is modified to N5-methylglutamine. Residues 281–301 (ERQSSELSADRKAQVGSGDRS) form a disordered region.

It belongs to the prokaryotic/mitochondrial release factor family. Post-translationally, methylated by PrmC. Methylation increases the termination efficiency of RF1.

Its subcellular location is the cytoplasm. Functionally, peptide chain release factor 1 directs the termination of translation in response to the peptide chain termination codons UAG and UAA. In Desulfovibrio desulfuricans (strain ATCC 27774 / DSM 6949 / MB), this protein is Peptide chain release factor 1.